We begin with the raw amino-acid sequence, 479 residues long: Calcium uniporter protein, mitochondrial (479 aa).

The N-terminal 54 residues, 1-54 (MNHALRRATLGLSPGLRASRLQQSFAKHQIPAVYRCEAASTPLQRAFTTSRCFR), are a transit peptide targeting the mitochondrion. At 55 to 323 (QETAAESEKD…DTLAHQGAHR (269 aa)) the chain is on the mitochondrial matrix side. Disordered regions lie at residues 56–125 (ETAA…KGRL) and 206–238 (EADQNEQDGRKDDNKKKDNANVASYSGLGHEGP). Residues 59–79 (AESEKDDAARREEQSERARKR) adopt a coiled-coil conformation. A compositionally biased stretch (basic and acidic residues) spans 60–75 (ESEKDDAARREEQSER). Residues 83-93 (NVTSGSSAQTL) show a composition bias toward polar residues. Composition is skewed to basic and acidic residues over residues 94–122 (ENDRPWHRADSGADPDAPKDVPENKDMKK) and 206–224 (EADQNEQDGRKDDNKKKDN). A helical transmembrane segment spans residues 324-344 (LAQGGFAALAGWWGVVYYVTF). The Mitochondrial intermembrane segment spans residues 345–354 (HTQAGWDLVE). The Selectivity filter signature appears at 350–358 (WDLVEPVTY). Glu354 contributes to the Ca(2+) binding site. The chain crosses the membrane as a helical span at residues 355-375 (PVTYLAGLTTVMGAYLWFLYI). Topologically, residues 376–479 (SRDLSYKAAM…GSSDKIKKKQ (104 aa)) are mitochondrial matrix. Over residues 445–462 (KVLEEEKQGRDGTKVTEG) the composition is skewed to basic and acidic residues. The segment at 445–479 (KVLEEEKQGRDGTKVTEGKDEDDGPGSSDKIKKKQ) is disordered.

This sequence belongs to the MCU (TC 1.A.77) family. In terms of assembly, homotetramer, assembles in a dimer or dimers configuration with two interfaces.

The protein resides in the mitochondrion inner membrane. The catalysed reaction is Ca(2+)(in) = Ca(2+)(out). Highly selective calcium channel localized to the inner mitochondrial membrane, which mediates calcium uptake into the mitochondrial matrix. Mitochondrial calcium homeostasis plays key roles in cellular physiology and regulates ATP production, cytoplasmic calcium signals and activation of cell death pathways. Sufficient to operate as a pore-forming channel without the need of calcium-sensor or auxiliary subunit. The polypeptide is Calcium uniporter protein, mitochondrial (Gibberella zeae (strain ATCC MYA-4620 / CBS 123657 / FGSC 9075 / NRRL 31084 / PH-1) (Wheat head blight fungus)).